Consider the following 1400-residue polypeptide: DNA-directed RNA polymerase subunit beta' (1400 aa).

The Zn(2+) site is built by Cys70, Cys72, Cys85, and Cys88. Residues Asp460, Asp462, and Asp464 each coordinate Mg(2+). The Zn(2+) site is built by Cys814, Cys888, Cys895, and Cys898.

This sequence belongs to the RNA polymerase beta' chain family. As to quaternary structure, the RNAP catalytic core consists of 2 alpha, 1 beta, 1 beta' and 1 omega subunit. When a sigma factor is associated with the core the holoenzyme is formed, which can initiate transcription. The cofactor is Mg(2+). Requires Zn(2+) as cofactor.

The catalysed reaction is RNA(n) + a ribonucleoside 5'-triphosphate = RNA(n+1) + diphosphate. Functionally, DNA-dependent RNA polymerase catalyzes the transcription of DNA into RNA using the four ribonucleoside triphosphates as substrates. The chain is DNA-directed RNA polymerase subunit beta' from Methylococcus capsulatus (strain ATCC 33009 / NCIMB 11132 / Bath).